Here is a 504-residue protein sequence, read N- to C-terminus: Probable cytochrome P450 513E1 (504 aa).

The chain crosses the membrane as a helical span at residues 1–21 (MNLYISILILIISLIIFFKNN). Cys450 serves as a coordination point for heme.

Belongs to the cytochrome P450 family. The cofactor is heme.

It localises to the membrane. The polypeptide is Probable cytochrome P450 513E1 (cyp513E1) (Dictyostelium discoideum (Social amoeba)).